We begin with the raw amino-acid sequence, 317 residues long: MYTKIIGTGSYLPEQVRTNADLEKMVDTSDEWIVTRTGIRERHIAAPNETVSTMGFEAATRAIEMAGIEKDQIGLIVVATTSATHAFPSAACQIQSMLGIKGCPAFDVAAACAGFTYALSVADQYVKSGAVKYALVVGSDVLARTCDPTDRGTIIIFGDGAGAAVLAASEEPGIISTHLHADGSYGELLTLPNADRVNPENSIHLTMAGNEVFKVAVTELAHIVDETLAANNLDRSQLDWLVPHQANLRIISATAKKLGMSMDNVVVTLDRHGNTSAASVPCALDEAVRDGRIKPGQLVLLEAFGGGFTWGSALVRF.

Catalysis depends on residues C112 and H244. Positions Q245–R249 are ACP-binding. The active site involves N274.

The protein belongs to the thiolase-like superfamily. FabH family. As to quaternary structure, homodimer.

It is found in the cytoplasm. It carries out the reaction malonyl-[ACP] + acetyl-CoA + H(+) = 3-oxobutanoyl-[ACP] + CO2 + CoA. Its pathway is lipid metabolism; fatty acid biosynthesis. Its function is as follows. Catalyzes the condensation reaction of fatty acid synthesis by the addition to an acyl acceptor of two carbons from malonyl-ACP. Catalyzes the first condensation reaction which initiates fatty acid synthesis and may therefore play a role in governing the total rate of fatty acid production. Possesses both acetoacetyl-ACP synthase and acetyl transacylase activities. Its substrate specificity determines the biosynthesis of branched-chain and/or straight-chain of fatty acids. This Shigella sonnei (strain Ss046) protein is Beta-ketoacyl-[acyl-carrier-protein] synthase III.